A 443-amino-acid chain; its full sequence is ATP-dependent protease ATPase subunit HslU (443 aa).

ATP-binding positions include isoleucine 20, 62–67 (GVGKTE), aspartate 255, glutamate 321, and arginine 393.

It belongs to the ClpX chaperone family. HslU subfamily. As to quaternary structure, a double ring-shaped homohexamer of HslV is capped on each side by a ring-shaped HslU homohexamer. The assembly of the HslU/HslV complex is dependent on binding of ATP.

It localises to the cytoplasm. ATPase subunit of a proteasome-like degradation complex; this subunit has chaperone activity. The binding of ATP and its subsequent hydrolysis by HslU are essential for unfolding of protein substrates subsequently hydrolyzed by HslV. HslU recognizes the N-terminal part of its protein substrates and unfolds these before they are guided to HslV for hydrolysis. The polypeptide is ATP-dependent protease ATPase subunit HslU (Helicobacter pylori (strain Shi470)).